The primary structure comprises 95 residues: Co-chaperonin GroES (95 aa).

A disordered region spans residues 36–55; it reads QEGEVVAVGSGKTLDDGSKV.

The protein belongs to the GroES chaperonin family. Heptamer of 7 subunits arranged in a ring. Interacts with the chaperonin GroEL.

Its subcellular location is the cytoplasm. Together with the chaperonin GroEL, plays an essential role in assisting protein folding. The GroEL-GroES system forms a nano-cage that allows encapsulation of the non-native substrate proteins and provides a physical environment optimized to promote and accelerate protein folding. GroES binds to the apical surface of the GroEL ring, thereby capping the opening of the GroEL channel. This Natranaerobius thermophilus (strain ATCC BAA-1301 / DSM 18059 / JW/NM-WN-LF) protein is Co-chaperonin GroES.